The sequence spans 364 residues: Aminomethyltransferase (364 aa).

The protein belongs to the GcvT family. In terms of assembly, the glycine cleavage system is composed of four proteins: P, T, L and H.

It catalyses the reaction N(6)-[(R)-S(8)-aminomethyldihydrolipoyl]-L-lysyl-[protein] + (6S)-5,6,7,8-tetrahydrofolate = N(6)-[(R)-dihydrolipoyl]-L-lysyl-[protein] + (6R)-5,10-methylene-5,6,7,8-tetrahydrofolate + NH4(+). The glycine cleavage system catalyzes the degradation of glycine. The polypeptide is Aminomethyltransferase (Escherichia coli (strain SMS-3-5 / SECEC)).